Consider the following 209-residue polypeptide: Molybdenum cofactor guanylyltransferase (209 aa).

GTP is bound by residues Leu-16–Gly-18, Lys-28, Asn-56, Asp-69, and Asp-103. Position 103 (Asp-103) interacts with Mg(2+).

Belongs to the MobA family. As to quaternary structure, monomer. Requires Mg(2+) as cofactor.

It is found in the cytoplasm. The enzyme catalyses Mo-molybdopterin + GTP + H(+) = Mo-molybdopterin guanine dinucleotide + diphosphate. In terms of biological role, transfers a GMP moiety from GTP to Mo-molybdopterin (Mo-MPT) cofactor (Moco or molybdenum cofactor) to form Mo-molybdopterin guanine dinucleotide (Mo-MGD) cofactor. The sequence is that of Molybdenum cofactor guanylyltransferase from Rhizobium leguminosarum bv. trifolii (strain WSM2304).